Here is a 467-residue protein sequence, read N- to C-terminus: Probable serine hydroxymethyltransferase, cytosolic (467 aa).

K243 carries the post-translational modification N6-(pyridoxal phosphate)lysine.

Belongs to the SHMT family. Homotetramer. The cofactor is pyridoxal 5'-phosphate.

It localises to the cytoplasm. It catalyses the reaction (6R)-5,10-methylene-5,6,7,8-tetrahydrofolate + glycine + H2O = (6S)-5,6,7,8-tetrahydrofolate + L-serine. It participates in one-carbon metabolism; tetrahydrofolate interconversion. In terms of biological role, interconversion of serine and glycine. The protein is Probable serine hydroxymethyltransferase, cytosolic of Schizosaccharomyces pombe (strain 972 / ATCC 24843) (Fission yeast).